Consider the following 333-residue polypeptide: Starch-binding domain-containing protein 1 (333 aa).

The Extracellular portion of the chain corresponds to 1 to 6 (MGAVWS). A helical transmembrane segment spans residues 7–23 (ALLVGGGLAGALILWLL). Topologically, residues 24-333 (RGDSGAPGKD…KVVHGWWGIH (310 aa)) are cytoplasmic. Disordered regions lie at residues 31–73 (GKDG…ELVS) and 106–139 (NARE…RVGE). The span at 50–61 (PGGGPGGGGSGG) shows a compositional bias: gly residues. S67 carries the post-translational modification Phosphoserine. Residues 124 to 134 (NSETSRNQSPE) show a composition bias toward polar residues. Phosphoserine is present on residues S135 and S162. The LIR signature appears at 181–187 (HEDWEVV). Residues S191, S192, S201, S205, S208, S216, and S219 each carry the phosphoserine modification. In terms of domain architecture, CBM20 spans 233–332 (SVKPRQVSIQ…DKVVHGWWGI (100 aa)).

As to quaternary structure, interacts with the ATG8 family proteins GABARAP and GABARAPL1. Interacts with several glycogen-associated proteins, such as GYS2 (liver glycogen synthase), GDE (glycogen debranching enzyme), GBE1 (glycogen branching enzyme 1) and EPM2A (Laforin). Ubiquitinated, which leads to proteasomal degradation.

Its subcellular location is the preautophagosomal structure membrane. The protein resides in the endoplasmic reticulum membrane. The protein localises to the cell membrane. It is found in the sarcolemma. It localises to the T-tubule. Its function is as follows. Acts as a cargo receptor for glycogen. Delivers its cargo to an autophagic pathway called glycophagy, resulting in the transport of glycogen to lysosomes. The protein is Starch-binding domain-containing protein 1 of Rattus norvegicus (Rat).